A 393-amino-acid polypeptide reads, in one-letter code: Formate-dependent phosphoribosylglycinamide formyltransferase (393 aa).

N(1)-(5-phospho-beta-D-ribosyl)glycinamide contacts are provided by residues 22-23 (EL) and glutamate 82. Residues arginine 114, lysine 155, 160 to 165 (SSGKGQ), 195 to 198 (EGFV), and glutamate 203 each bind ATP. An ATP-grasp domain is found at 119–308 (RLAAEELGLP…EFALHVRAIL (190 aa)). Residues glutamate 267 and glutamate 279 each coordinate Mg(2+). N(1)-(5-phospho-beta-D-ribosyl)glycinamide-binding positions include aspartate 286, lysine 356, and 363–364 (RR).

This sequence belongs to the PurK/PurT family. As to quaternary structure, homodimer.

It catalyses the reaction N(1)-(5-phospho-beta-D-ribosyl)glycinamide + formate + ATP = N(2)-formyl-N(1)-(5-phospho-beta-D-ribosyl)glycinamide + ADP + phosphate + H(+). It functions in the pathway purine metabolism; IMP biosynthesis via de novo pathway; N(2)-formyl-N(1)-(5-phospho-D-ribosyl)glycinamide from N(1)-(5-phospho-D-ribosyl)glycinamide (formate route): step 1/1. Functionally, involved in the de novo purine biosynthesis. Catalyzes the transfer of formate to 5-phospho-ribosyl-glycinamide (GAR), producing 5-phospho-ribosyl-N-formylglycinamide (FGAR). Formate is provided by PurU via hydrolysis of 10-formyl-tetrahydrofolate. The polypeptide is Formate-dependent phosphoribosylglycinamide formyltransferase (Nitratidesulfovibrio vulgaris (strain ATCC 29579 / DSM 644 / CCUG 34227 / NCIMB 8303 / VKM B-1760 / Hildenborough) (Desulfovibrio vulgaris)).